Reading from the N-terminus, the 96-residue chain is Muconolactone Delta-isomerase 1 (96 aa).

Belongs to the muconolactone Delta-isomerase family. Homodecamer.

The catalysed reaction is (S)-muconolactone = (4,5-dihydro-5-oxofuran-2-yl)-acetate. It participates in aromatic compound metabolism; beta-ketoadipate pathway; 5-oxo-4,5-dihydro-2-furylacetate from catechol: step 3/3. In Acinetobacter lwoffii, this protein is Muconolactone Delta-isomerase 1 (catC1).